A 509-amino-acid chain; its full sequence is Photosystem II CP47 reaction center protein (509 aa).

6 helical membrane-spanning segments follow: residues 21-36, 101-115, 140-156, 203-218, 237-252, and 457-472; these read AVHL…WAGS, IVLS…IWHW, GIHL…FGAF, IAAG…FHLT, VLSS…AFIT, and NFAL…HGSR.

This sequence belongs to the PsbB/PsbC family. PsbB subfamily. In terms of assembly, PSII is composed of 1 copy each of membrane proteins PsbA, PsbB, PsbC, PsbD, PsbE, PsbF, PsbH, PsbI, PsbJ, PsbK, PsbL, PsbM, PsbT, PsbX, PsbY, PsbZ, Psb30/Ycf12, at least 3 peripheral proteins of the oxygen-evolving complex and a large number of cofactors. It forms dimeric complexes. Binds multiple chlorophylls. PSII binds additional chlorophylls, carotenoids and specific lipids. is required as a cofactor.

It is found in the plastid. Its subcellular location is the chloroplast thylakoid membrane. One of the components of the core complex of photosystem II (PSII). It binds chlorophyll and helps catalyze the primary light-induced photochemical processes of PSII. PSII is a light-driven water:plastoquinone oxidoreductase, using light energy to abstract electrons from H(2)O, generating O(2) and a proton gradient subsequently used for ATP formation. The protein is Photosystem II CP47 reaction center protein of Porphyra purpurea (Red seaweed).